We begin with the raw amino-acid sequence, 156 residues long: Regulatory protein RecX (156 aa).

This sequence belongs to the RecX family.

Its subcellular location is the cytoplasm. Its function is as follows. Modulates RecA activity. The polypeptide is Regulatory protein RecX (Pseudomonas putida (strain ATCC 700007 / DSM 6899 / JCM 31910 / BCRC 17059 / LMG 24140 / F1)).